The primary structure comprises 520 residues: Cytochrome P450 72A68 (520 aa).

A helical membrane pass occupies residues 11-31; it reads IILITVTFGLVYAWRVLNWMW. C466 lines the heme pocket.

The protein belongs to the cytochrome P450 family. Requires heme as cofactor.

It is found in the membrane. It catalyses the reaction oleanolate + 3 reduced [NADPH--hemoprotein reductase] + 3 O2 = gypsogenate + 3 oxidized [NADPH--hemoprotein reductase] + 4 H2O + 4 H(+). Its function is as follows. Catalyzes the carboxylation of oleanolic acid at the C-23 position to form gypsogenic acid. Involved in the hemolytic saponin biosynthetic pathway. This Medicago truncatula (Barrel medic) protein is Cytochrome P450 72A68.